Here is a 118-residue protein sequence, read N- to C-terminus: uncharacterized protein (118 aa).

The next 4 membrane-spanning stretches (helical) occupy residues 12 to 32, 39 to 59, 63 to 83, and 98 to 118; these read IISL…FATF, LMPH…SLFI, IIGY…CPTI, and SAHL…VILF.

The protein localises to the cell membrane. This is an uncharacterized protein from Methanocaldococcus jannaschii (strain ATCC 43067 / DSM 2661 / JAL-1 / JCM 10045 / NBRC 100440) (Methanococcus jannaschii).